The sequence spans 474 residues: Bifunctional protein HldE (474 aa).

The ribokinase stretch occupies residues 1–318 (MKLSMPRFDQ…RAVQREQGSE (318 aa)). 194–197 (NLSE) is a binding site for ATP. Aspartate 263 is an active-site residue. The interval 343–474 (FTNGCFDILH…AIVEKIRQKG (132 aa)) is cytidylyltransferase.

The protein in the N-terminal section; belongs to the carbohydrate kinase PfkB family. It in the C-terminal section; belongs to the cytidylyltransferase family. Homodimer.

The enzyme catalyses D-glycero-beta-D-manno-heptose 7-phosphate + ATP = D-glycero-beta-D-manno-heptose 1,7-bisphosphate + ADP + H(+). The catalysed reaction is D-glycero-beta-D-manno-heptose 1-phosphate + ATP + H(+) = ADP-D-glycero-beta-D-manno-heptose + diphosphate. It functions in the pathway nucleotide-sugar biosynthesis; ADP-L-glycero-beta-D-manno-heptose biosynthesis; ADP-L-glycero-beta-D-manno-heptose from D-glycero-beta-D-manno-heptose 7-phosphate: step 1/4. It participates in nucleotide-sugar biosynthesis; ADP-L-glycero-beta-D-manno-heptose biosynthesis; ADP-L-glycero-beta-D-manno-heptose from D-glycero-beta-D-manno-heptose 7-phosphate: step 3/4. In terms of biological role, catalyzes the phosphorylation of D-glycero-D-manno-heptose 7-phosphate at the C-1 position to selectively form D-glycero-beta-D-manno-heptose-1,7-bisphosphate. Its function is as follows. Catalyzes the ADP transfer from ATP to D-glycero-beta-D-manno-heptose 1-phosphate, yielding ADP-D-glycero-beta-D-manno-heptose. This is Bifunctional protein HldE from Pseudomonas aeruginosa (strain UCBPP-PA14).